Reading from the N-terminus, the 260-residue chain is Imidazole glycerol phosphate synthase subunit HisF (260 aa).

Catalysis depends on residues Asp11 and Asp130.

This sequence belongs to the HisA/HisF family. Heterodimer of HisH and HisF.

The protein resides in the cytoplasm. The catalysed reaction is 5-[(5-phospho-1-deoxy-D-ribulos-1-ylimino)methylamino]-1-(5-phospho-beta-D-ribosyl)imidazole-4-carboxamide + L-glutamine = D-erythro-1-(imidazol-4-yl)glycerol 3-phosphate + 5-amino-1-(5-phospho-beta-D-ribosyl)imidazole-4-carboxamide + L-glutamate + H(+). The protein operates within amino-acid biosynthesis; L-histidine biosynthesis; L-histidine from 5-phospho-alpha-D-ribose 1-diphosphate: step 5/9. In terms of biological role, IGPS catalyzes the conversion of PRFAR and glutamine to IGP, AICAR and glutamate. The HisF subunit catalyzes the cyclization activity that produces IGP and AICAR from PRFAR using the ammonia provided by the HisH subunit. This chain is Imidazole glycerol phosphate synthase subunit HisF, found in Desulfatibacillum aliphaticivorans.